A 777-amino-acid chain; its full sequence is Shutoff protein (777 aa).

2 disordered regions span residues 1 to 55 and 261 to 283; these read MEED…SVPV and PLDS…DDDL. A compositionally biased stretch (polar residues) spans 9–20; that stretch reads QPDSETLTSPTS. The interval 250-314 is binding to host EIF4G; it reads VMDHLLIKRV…VILVTVELEC (65 aa). The RRM domain maps to 317-435; that stretch reads RFFANPQTLR…ELWTAFSERT (119 aa). Tyr-334 and Tyr-649 each carry phosphotyrosine; by host. The tract at residues 652–777 is disordered; it reads PQTGEELNTP…AAARLVESQP (126 aa). The segment covering 656 to 665 has biased composition (polar residues); it reads EELNTPSPSA. Gly residues predominate over residues 728–738; it reads GAGGQTPQGRG. Over residues 753–763 the composition is skewed to basic and acidic residues; the sequence is TRSEPASDGES.

The protein belongs to the adenoviridae shutoff protein family. In terms of assembly, monomer. Interacts with hexon protein; this interaction allows chaperoning and trimerization of hexon proteins. Interacts (via N-terminus) with host initiation factor EIF4G (via C-terminus). Interacts (via RRM domain) with viral mRNAs that contain the tripartite leader; this interaction allows ribosome shunting and expression of viral late mRNAs. Post-translationally, might be cleaved by the viral protease. In terms of processing, phosphorylated. Tyrosine phosphorylation enhances preferential binding to tripartite leader mRNAs and allows ribosome shunting. Methylated. Asymmetric dimethylation by host PRMT1 of the Arg/Gly-rich region may regulate shutoff protein binding to hexon and promote the capsid assembly in the nucleus.

Its subcellular location is the host cytoplasm. Protein that inhibits host translation while promoting late viral translation by ribosome shunting. Blocks host cap-dependent translation by binding to eIF4G, displacing MKNK1 from cap initiation complexes and preventing EIF4E phosphorylation. Binds to the tripartite leader sequence of viral late mRNAs and recruits host eIF4G, PABPC1/poly-A binding protein and 40S ribosomes subunits on viral mRNAs, allowing ribosome shunting and efficient translation of late viral mRNAs even though conventional translation via ribosome scanning from the cap has been shut off in the host cell. During assembly, acts as a chaperone protein that helps hexon proteins assembly into trimers. In Homo sapiens (Human), this protein is Shutoff protein.